Here is a 439-residue protein sequence, read N- to C-terminus: GTPase Der (439 aa).

EngA-type G domains lie at 3–167 and 176–351; these read PLVA…PKSS and TRIA…AQYS. GTP-binding positions include 9–16, 56–60, 119–122, 182–189, 229–233, and 294–297; these read GRPNVGKS, DTGGF, NKVD, DTAGI, and NKWD. The 85-residue stretch at 352-436 folds into the KH-like domain; sequence KRVSTSDLNR…PLKIIFRGRD (85 aa).

Belongs to the TRAFAC class TrmE-Era-EngA-EngB-Septin-like GTPase superfamily. EngA (Der) GTPase family. In terms of assembly, associates with the 50S ribosomal subunit.

GTPase that plays an essential role in the late steps of ribosome biogenesis. The protein is GTPase Der of Geobacter metallireducens (strain ATCC 53774 / DSM 7210 / GS-15).